A 33-amino-acid polypeptide reads, in one-letter code: Mytimycin (33 aa).

The protein localises to the secreted. Its function is as follows. Has antifungal activity against N.crassa and F.culmorum. This is Mytimycin from Mytilus edulis (Blue mussel).